The following is a 695-amino-acid chain: Polyribonucleotide nucleotidyltransferase (695 aa).

Positions 486 and 492 each coordinate Mg(2+). Residues 553–612 (PRIETMQINTSKIATVIGPGGKQIRQIIERSGAQVDINDDGVINIAASTQESINKAKELI) enclose the KH domain. In terms of domain architecture, S1 motif spans 622–690 (GKVYNGRVTS…EKGQLKLSHK (69 aa)).

The protein belongs to the polyribonucleotide nucleotidyltransferase family. It depends on Mg(2+) as a cofactor.

The protein resides in the cytoplasm. It carries out the reaction RNA(n+1) + phosphate = RNA(n) + a ribonucleoside 5'-diphosphate. Functionally, involved in mRNA degradation. Catalyzes the phosphorolysis of single-stranded polyribonucleotides processively in the 3'- to 5'-direction. The chain is Polyribonucleotide nucleotidyltransferase from Chlamydia trachomatis serovar L2 (strain ATCC VR-902B / DSM 19102 / 434/Bu).